The primary structure comprises 399 residues: Probable F-box protein At4g22060 (399 aa).

The F-box domain maps to 12–48; sequence SWSKLPLDLLIMVFERLGFVDFQRTKSVCLAWLYASR.

The polypeptide is Probable F-box protein At4g22060 (Arabidopsis thaliana (Mouse-ear cress)).